The chain runs to 444 residues: COP9 signalosome complex subunit 2 (444 aa).

A disordered region spans residues 1–31 (MSDNDDDFMCDDDEDYGLEYSEDSNSEPDVD). The PCI domain maps to 255–417 (AHTDFFEAFK…QVLQLDKINS (163 aa)).

This sequence belongs to the CSN2 family. In terms of assembly, component of the CSN complex, probably composed of CSN1b, alien/CSN2, CSN3, CSN4, CSN5, CSN6, CSN7 and CSN8. Interacts with Rpn6. Expressed during embryonic stages 11-14 in the muscle attachment sites (apodemes); pharynx attachment to the roof of the mouth and in the epidermis of the head for the dorsal and ventral prothoracic pharyngeal muscle attachment. From stage 16 onwards expression is seen in all thoracic and abdominal apodemes.

It localises to the cytoplasm. The protein resides in the nucleus. Component of the COP9 signalosome complex (CSN), a complex involved in various cellular and developmental processes. The CSN complex is an essential regulator of the ubiquitin (Ubl) conjugation pathway by mediating the deneddylation of the cullin subunits of the SCF-type E3 ligase complexes, leading to decrease the Ubl ligase activity of SCF. The CSN complex plays an essential role in oogenesis and embryogenesis and is required for proper photoreceptor R cell differentiation and promote lamina glial cell migration or axon targeting. It also promotes Ubl-dependent degradation of cyclin E (CycE) during early oogenesis. This is COP9 signalosome complex subunit 2 from Drosophila melanogaster (Fruit fly).